The sequence spans 730 residues: Ribosomal RNA large subunit methyltransferase K/L (730 aa).

In terms of domain architecture, THUMP spans 46 to 157; sequence TAYRLCLWSR…RGEAILSLDL (112 aa). A compositionally biased stretch (basic and acidic residues) spans 399 to 408; sequence AAVEEGEPRR. Residues 399 to 418 are disordered; that stretch reads AAVEEGEPRRQAPVASEPAR.

This sequence belongs to the methyltransferase superfamily. RlmKL family.

Its subcellular location is the cytoplasm. It carries out the reaction guanosine(2445) in 23S rRNA + S-adenosyl-L-methionine = N(2)-methylguanosine(2445) in 23S rRNA + S-adenosyl-L-homocysteine + H(+). The enzyme catalyses guanosine(2069) in 23S rRNA + S-adenosyl-L-methionine = N(2)-methylguanosine(2069) in 23S rRNA + S-adenosyl-L-homocysteine + H(+). Functionally, specifically methylates the guanine in position 2445 (m2G2445) and the guanine in position 2069 (m7G2069) of 23S rRNA. This is Ribosomal RNA large subunit methyltransferase K/L from Pseudomonas entomophila (strain L48).